Consider the following 638-residue polypeptide: Probable inactive receptor kinase At4g23740 (638 aa).

A signal peptide spans 1–24; the sequence is MEALRIYLWSLCLSLCLIIYGANS. LRR repeat units lie at residues 94 to 117, 118 to 139, 142 to 165, 166 to 188, and 189 to 198; these read ALRV…VELK, DLAF…DFSV, NLTS…SRLK, RIQS…SVLS, and SLQHIDLSNN. A helical transmembrane segment spans residues 257–277; the sequence is VFLLIVIAVSIVVITALAFVL. Residues 337 to 608 form the Protein kinase domain; it reads RASAEVLGKG…SDLVRLIENV (272 aa). Serine 339 carries the post-translational modification Phosphoserine. 343-351 serves as a coordination point for ATP; it reads LGKGTFGTT. Position 360 is a phosphothreonine (threonine 360). An ATP-binding site is contributed by lysine 365. Phosphoserine is present on residues serine 416 and serine 419. 2 positions are modified to phosphothreonine: threonine 436 and threonine 509. Serine 513 is modified (phosphoserine). A disordered region spans residues 612–638; it reads RTSIEPEPELKPKSENGASETSTPSEI. The span at 613 to 625 shows a compositional bias: basic and acidic residues; it reads TSIEPEPELKPKS. The segment covering 627–638 has biased composition (polar residues); it reads NGASETSTPSEI.

This sequence belongs to the protein kinase superfamily.

The protein resides in the membrane. This Arabidopsis thaliana (Mouse-ear cress) protein is Probable inactive receptor kinase At4g23740.